The sequence spans 151 residues: Deoxyuridine 5'-triphosphate nucleotidohydrolase (151 aa).

Substrate is bound by residues R70 to G72, N83, L87 to D89, and M97.

Belongs to the dUTPase family. It depends on Mg(2+) as a cofactor.

The enzyme catalyses dUTP + H2O = dUMP + diphosphate + H(+). The protein operates within pyrimidine metabolism; dUMP biosynthesis; dUMP from dCTP (dUTP route): step 2/2. Its function is as follows. This enzyme is involved in nucleotide metabolism: it produces dUMP, the immediate precursor of thymidine nucleotides and it decreases the intracellular concentration of dUTP so that uracil cannot be incorporated into DNA. The sequence is that of Deoxyuridine 5'-triphosphate nucleotidohydrolase from Pseudomonas paraeruginosa (strain DSM 24068 / PA7) (Pseudomonas aeruginosa (strain PA7)).